Consider the following 155-residue polypeptide: Ribosome maturation factor RimP (155 aa).

The protein belongs to the RimP family.

It localises to the cytoplasm. Required for maturation of 30S ribosomal subunits. In Synechococcus sp. (strain CC9902), this protein is Ribosome maturation factor RimP.